The sequence spans 651 residues: Beta-glucuronidase (651 aa).

A signal peptide spans 1 to 22; the sequence is MLRGPAAVWAALGPLLWACGLA. Residues Asn172 and Asn419 are each glycosylated (N-linked (GlcNAc...) asparagine). The active-site Proton donor is the Glu450. N-linked (GlcNAc...) asparagine glycosylation is present at Asn630.

It belongs to the glycosyl hydrolase 2 family. Homotetramer.

It is found in the lysosome. The enzyme catalyses a beta-D-glucuronoside + H2O = D-glucuronate + an alcohol. With respect to regulation, inhibited by L-aspartic acid. In terms of biological role, plays an important role in the degradation of dermatan and keratan sulfates. The chain is Beta-glucuronidase (GUSB) from Felis catus (Cat).